Consider the following 618-residue polypeptide: Uptake hydrogenase large subunit (618 aa).

The Ni(2+) site is built by C75, C78, C597, and C600.

Belongs to the [NiFe]/[NiFeSe] hydrogenase large subunit family. Heterodimer of a large and a small subunit. Ni(2+) serves as cofactor.

The protein localises to the cell membrane. The enzyme catalyses H2 + A = AH2. Its function is as follows. This enzyme recycles the H(2) produced by nitrogenase to increase the production of ATP and to protect nitrogenase against inhibition or damage by O(2) under carbon- or phosphate-limited conditions. In Rubrivivax gelatinosus (Rhodocyclus gelatinosus), this protein is Uptake hydrogenase large subunit (hupB).